The chain runs to 557 residues: Prosaposin (557 aa).

Positions 1-16 (MYALALFASLLATALT) are cleaved as a signal peptide. Positions 17 to 59 (SPVQDPKTCSGGSAVLCRDVKTAVDCGAVKHCQQMVWSKPTAK) are excised as a propeptide. In terms of domain architecture, Saposin A-type 1 spans 18–58 (PVQDPKTCSGGSAVLCRDVKTAVDCGAVKHCQQMVWSKPTA). Saposin B-type domains are found at residues 59-142 (KSLP…QSLQ), 193-277 (NEDV…NEVK), 313-394 (NVIL…AARP), and 438-519 (NGGF…PSAY). Intrachain disulfides connect Cys63–Cys138, Cys66–Cys132, and Cys94–Cys106. N-linked (GlcNAc...) asparagine glycosylation is present at Asn80. Positions 143–193 (EYLAEQNQKQLESNKIPEVDMARVVAPFMSNIPLLLYPQDHPRSQPQPKAN) are excised as a propeptide. 3 cysteine pairs are disulfide-bonded: Cys197–Cys273, Cys200–Cys267, and Cys229–Cys240. Asn214 carries N-linked (GlcNAc...) asparagine glycosylation. A propeptide spanning residues 277–312 (KRVPMKTLVPATETIKNILPALEMMDPYEQNLVQAH) is cleaved from the precursor. 3 disulfide bridges follow: Cys317-Cys390, Cys320-Cys384, and Cys348-Cys359. The N-linked (GlcNAc...) asparagine glycan is linked to Asn334. A propeptide spanning residues 393-437 (RPELVEALEQPAPAIVSALLKEPTPPKQPAQPKQSALPAHVPPQK) is cleaved from the precursor. Intrachain disulfides connect Cys442–Cys515, Cys445–Cys509, and Cys473–Cys484. N-linked (GlcNAc...) asparagine glycosylation is present at Asn459. The propeptide occupies 520 to 557 (KLLLGTEKCVWGPSYWCQNMETAARCNAVDHCKRHVWN). The region spanning 521–557 (LLLGTEKCVWGPSYWCQNMETAARCNAVDHCKRHVWN) is the Saposin A-type 2 domain.

As to quaternary structure, saposin-B is a homodimer. Prosaposin exists as a roughly half-half mixture of monomers and disulfide-linked dimers. Monomeric prosaposin interacts (via C-terminus) with sortilin/SORT1, the interaction is required for targeting to lysosomes. Interacts with GRN; facilitates lysosomal delivery of progranulin from the extracellular space and the biosynthetic pathway.

It is found in the secreted. The protein localises to the lysosome. Functionally, behaves as a myelinotrophic and neurotrophic factor, these effects are mediated by its G-protein-coupled receptors, GPR37 and GPR37L1, undergoing ligand-mediated internalization followed by ERK phosphorylation signaling. Its function is as follows. Saposin-A and saposin-C stimulate the hydrolysis of glucosylceramide by beta-glucosylceramidase (EC 3.2.1.45) and galactosylceramide by beta-galactosylceramidase (EC 3.2.1.46). Saposin-C apparently acts by combining with the enzyme and acidic lipid to form an activated complex, rather than by solubilizing the substrate. Saposin-B stimulates the hydrolysis of galacto-cerebroside sulfate by arylsulfatase A (EC 3.1.6.8), GM1 gangliosides by beta-galactosidase (EC 3.2.1.23) and globotriaosylceramide by alpha-galactosidase A (EC 3.2.1.22). Saposin-B forms a solubilizing complex with the substrates of the sphingolipid hydrolases. In terms of biological role, saposin-D is a specific sphingomyelin phosphodiesterase activator (EC 3.1.4.12). Functionally, saposins are specific low-molecular mass non-enzymatic proteins, they participate in the lysosomal degradation of sphingolipids, which takes place by the sequential action of specific hydrolases. In Mus musculus (Mouse), this protein is Prosaposin (Psap).